The sequence spans 424 residues: Enolase (424 aa).

Glutamine 163 is a binding site for (2R)-2-phosphoglycerate. Residue glutamate 205 is the Proton donor of the active site. Positions 242, 285, and 312 each coordinate Mg(2+). Residues lysine 337, arginine 366, serine 367, and lysine 388 each coordinate (2R)-2-phosphoglycerate. Lysine 337 functions as the Proton acceptor in the catalytic mechanism.

It belongs to the enolase family. Mg(2+) serves as cofactor.

Its subcellular location is the cytoplasm. The protein resides in the secreted. It is found in the cell surface. It carries out the reaction (2R)-2-phosphoglycerate = phosphoenolpyruvate + H2O. It participates in carbohydrate degradation; glycolysis; pyruvate from D-glyceraldehyde 3-phosphate: step 4/5. Catalyzes the reversible conversion of 2-phosphoglycerate (2-PG) into phosphoenolpyruvate (PEP). It is essential for the degradation of carbohydrates via glycolysis. This is Enolase from Roseobacter denitrificans (strain ATCC 33942 / OCh 114) (Erythrobacter sp. (strain OCh 114)).